Consider the following 219-residue polypeptide: Large ribosomal subunit protein uL3 (219 aa).

Residues 134-153 form a disordered region; it reads RASHGNSRSHNVPGSIGMAQ. Q153 bears the N5-methylglutamine mark.

It belongs to the universal ribosomal protein uL3 family. In terms of assembly, part of the 50S ribosomal subunit. Forms a cluster with proteins L14 and L19. In terms of processing, methylated by PrmB.

In terms of biological role, one of the primary rRNA binding proteins, it binds directly near the 3'-end of the 23S rRNA, where it nucleates assembly of the 50S subunit. The protein is Large ribosomal subunit protein uL3 of Paraburkholderia phytofirmans (strain DSM 17436 / LMG 22146 / PsJN) (Burkholderia phytofirmans).